A 131-amino-acid chain; its full sequence is RxLR effector protein 62 (131 aa).

Positions 1 to 19 (MRLDILLFTLSSSTSLALS) are cleaved as a signal peptide. The RxLR-dEER signature appears at 49 to 60 (RHLREEPANEAR). Asparagine 61 carries N-linked (GlcNAc...) asparagine glycosylation.

This sequence belongs to the RxLR effector family.

The protein resides in the secreted. It is found in the host cell. Functionally, secreted effector that suppresses callose deposition, a hallmark of pathogen-associated molecular pattern (PAMP)-triggered immunity (PTI) and renders host plants more susceptible to bacterial infection. Reduces host plant responsiveness to salicylic acid (SA) in haustoriated cells into which host-translocated effectors are delivered. This is RxLR effector protein 62 from Hyaloperonospora arabidopsidis (strain Emoy2) (Downy mildew agent).